The primary structure comprises 213 residues: Large ribosomal subunit protein bL25 (213 aa).

Belongs to the bacterial ribosomal protein bL25 family. CTC subfamily. As to quaternary structure, part of the 50S ribosomal subunit; part of the 5S rRNA/L5/L18/L25 subcomplex. Contacts the 5S rRNA. Binds to the 5S rRNA independently of L5 and L18.

Its function is as follows. This is one of the proteins that binds to the 5S RNA in the ribosome where it forms part of the central protuberance. This Mesorhizobium japonicum (strain LMG 29417 / CECT 9101 / MAFF 303099) (Mesorhizobium loti (strain MAFF 303099)) protein is Large ribosomal subunit protein bL25.